A 217-amino-acid chain; its full sequence is Serine acetyltransferase (217 aa).

Belongs to the transferase hexapeptide repeat family.

It localises to the cytoplasm. It catalyses the reaction L-serine + acetyl-CoA = O-acetyl-L-serine + CoA. It functions in the pathway amino-acid biosynthesis; L-cysteine biosynthesis; L-cysteine from L-serine: step 1/2. Inhibited by cysteine. In terms of biological role, catalyzes the acetylation of serine by acetyl-CoA to produce O-acetylserine (OAS). The polypeptide is Serine acetyltransferase (cysE) (Bacillus subtilis (strain 168)).